The chain runs to 218 residues: Protein-L-isoaspartate O-methyltransferase (218 aa).

Ser-66 is a catalytic residue.

It belongs to the methyltransferase superfamily. L-isoaspartyl/D-aspartyl protein methyltransferase family.

The protein resides in the cytoplasm. The catalysed reaction is [protein]-L-isoaspartate + S-adenosyl-L-methionine = [protein]-L-isoaspartate alpha-methyl ester + S-adenosyl-L-homocysteine. Functionally, catalyzes the methyl esterification of L-isoaspartyl residues in peptides and proteins that result from spontaneous decomposition of normal L-aspartyl and L-asparaginyl residues. It plays a role in the repair and/or degradation of damaged proteins. The protein is Protein-L-isoaspartate O-methyltransferase of Caulobacter sp. (strain K31).